Consider the following 303-residue polypeptide: Phosphatidylglycerol--prolipoprotein diacylglyceryl transferase (303 aa).

Helical transmembrane passes span 18 to 38 (LGPF…LVGL), 58 to 78 (LLPI…VAFE), 106 to 126 (IWGG…SIIF), and 133 to 153 (EHFW…QAIG). An a 1,2-diacyl-sn-glycero-3-phospho-(1'-sn-glycerol)-binding site is contributed by Arg-154. A run of 3 helical transmembrane segments spans residues 193-213 (PTFL…IFLF), 223-243 (LPPG…RFWI), and 266-286 (IAQL…WRIY).

It belongs to the Lgt family.

Its subcellular location is the cell inner membrane. The catalysed reaction is L-cysteinyl-[prolipoprotein] + a 1,2-diacyl-sn-glycero-3-phospho-(1'-sn-glycerol) = an S-1,2-diacyl-sn-glyceryl-L-cysteinyl-[prolipoprotein] + sn-glycerol 1-phosphate + H(+). It functions in the pathway protein modification; lipoprotein biosynthesis (diacylglyceryl transfer). Functionally, catalyzes the transfer of the diacylglyceryl group from phosphatidylglycerol to the sulfhydryl group of the N-terminal cysteine of a prolipoprotein, the first step in the formation of mature lipoproteins. In Prochlorococcus marinus (strain NATL2A), this protein is Phosphatidylglycerol--prolipoprotein diacylglyceryl transferase.